A 103-amino-acid polypeptide reads, in one-letter code: Alkanal monooxygenase alpha chain (103 aa).

In terms of assembly, heterodimer of an alpha and a beta chain.

It catalyses the reaction a long-chain fatty aldehyde + FMNH2 + O2 = a long-chain fatty acid + hnu + FMN + H2O + 2 H(+). Its function is as follows. Light-emitting reaction in luminous bacteria. This is Alkanal monooxygenase alpha chain (luxA) from Vibrio cholerae.